Reading from the N-terminus, the 347-residue chain is NADH-ubiquinone oxidoreductase chain 2 (347 aa).

Transmembrane regions (helical) follow at residues 3–23, 25–45, 59–79, 96–116, 122–142, 149–169, 178–198, 201–221, 237–257, 274–294, and 326–346; these read PLIF…VMTT, HWVM…PILM, YFLT…INLT, IIMT…FWVP, VQLS…MSIL, INLD…GWGG, ILAY…VYNP, ALLN…MLMV, MPLL…LPPL, DSMI…YFYM, and LSPL…LALL.

The protein belongs to the complex I subunit 2 family. As to quaternary structure, core subunit of respiratory chain NADH dehydrogenase (Complex I) which is composed of 45 different subunits. Interacts with TMEM242.

It is found in the mitochondrion inner membrane. It carries out the reaction a ubiquinone + NADH + 5 H(+)(in) = a ubiquinol + NAD(+) + 4 H(+)(out). Its function is as follows. Core subunit of the mitochondrial membrane respiratory chain NADH dehydrogenase (Complex I) which catalyzes electron transfer from NADH through the respiratory chain, using ubiquinone as an electron acceptor. Essential for the catalytic activity and assembly of complex I. In Nyctimene aello (Broad-striped tube-nosed fruit bat), this protein is NADH-ubiquinone oxidoreductase chain 2.